We begin with the raw amino-acid sequence, 149 residues long: Arginine repressor (149 aa).

Belongs to the ArgR family.

It localises to the cytoplasm. It functions in the pathway amino-acid biosynthesis; L-arginine biosynthesis [regulation]. In terms of biological role, regulates arginine biosynthesis genes. The chain is Arginine repressor from Exiguobacterium sibiricum (strain DSM 17290 / CCUG 55495 / CIP 109462 / JCM 13490 / 255-15).